The chain runs to 139 residues: DNA-directed RNA polymerase II subunit Rpb4 (139 aa).

Belongs to the eukaryotic RPB4 RNA polymerase subunit family. RNA polymerase II consists of 12 different subunits.

The protein localises to the nucleus. It localises to the chromosome. In terms of biological role, DNA-dependent RNA polymerase catalyzes the transcription of DNA into RNA using the four ribonucleoside triphosphates as substrates. Associates with POLR2G. This Drosophila melanogaster (Fruit fly) protein is DNA-directed RNA polymerase II subunit Rpb4.